The primary structure comprises 749 residues: Phosphate-regulating neutral endopeptidase PHEX (749 aa).

Topologically, residues 1-20 are cytoplasmic; sequence MEAETGSSVETGKKANRGTR. A helical; Signal-anchor for type II membrane protein membrane pass occupies residues 21 to 41; sequence IALVVFVGGTLVLGTILFLVS. Over 42-641 the chain is Extracellular; the sequence is QGLLSLQAKQ…LNVKGKRTLG (600 aa). The Peptidase M13 domain occupies 53 to 749; sequence YCLKPECIEA…NRGMDSCRLW (697 aa). Cysteines 54 and 59 form a disulfide. N-linked (GlcNAc...) asparagine glycans are attached at residues N71, N238, N263, N290, N301, N377, and N484. Disulfide bonds link C77-C733, C85-C693, C142-C406, and C617-C746. H580 is a Zn(2+) binding site. E581 is a catalytic residue. Residues H584 and E642 each coordinate Zn(2+). The Proton donor role is filled by D646. N736 carries N-linked (GlcNAc...) asparagine glycosylation.

The protein belongs to the peptidase M13 family. Interacts with MEPE; the interaction is zinc-dependent (via ASARM motif). It depends on Zn(2+) as a cofactor. In terms of tissue distribution, specifically expressed in ovary. Expressed at low levels in kidney.

The protein localises to the cell membrane. Its function is as follows. Peptidase that cleaves SIBLING (small integrin-binding ligand, N-linked glycoprotein)-derived ASARM peptides, thus regulating their biological activity. Cleaves ASARM peptides between Ser and Glu or Asp residues. Regulates osteogenic cell differentiation and bone mineralization through the cleavage of the MEPE-derived ASARM peptide. Promotes dentin mineralization and renal phosphate reabsorption by cleaving DMP1- and MEPE-derived ASARM peptides. Inhibits the cleavage of MEPE by CTSB/cathepsin B thus preventing MEPE degradation. This Homo sapiens (Human) protein is Phosphate-regulating neutral endopeptidase PHEX (PHEX).